We begin with the raw amino-acid sequence, 548 residues long: Chaperonin GroEL (548 aa).

ATP is bound by residues 30-33, K51, 87-91, G415, 479-481, and D495; these read TLGP, DGTTT, and NAA. The interval 524–548 is disordered; sequence LPKEDKSSDSSSSPAGGMGGMGGMM. Over residues 539–548 the composition is skewed to gly residues; it reads GGMGGMGGMM.

This sequence belongs to the chaperonin (HSP60) family. As to quaternary structure, forms a cylinder of 14 subunits composed of two heptameric rings stacked back-to-back. Interacts with the co-chaperonin GroES.

The protein localises to the cytoplasm. It carries out the reaction ATP + H2O + a folded polypeptide = ADP + phosphate + an unfolded polypeptide.. In terms of biological role, together with its co-chaperonin GroES, plays an essential role in assisting protein folding. The GroEL-GroES system forms a nano-cage that allows encapsulation of the non-native substrate proteins and provides a physical environment optimized to promote and accelerate protein folding. The polypeptide is Chaperonin GroEL (Buchnera aphidicola subsp. Acyrthosiphon pisum (strain Tuc7)).